Consider the following 270-residue polypeptide: 4-hydroxy-tetrahydrodipicolinate reductase (270 aa).

Residues 8–13, Asp34, 102–104, and 128–131 contribute to the NAD(+) site; these read GALGRM, GTT, and SQNY. His160 functions as the Proton donor/acceptor in the catalytic mechanism. Residue His161 participates in (S)-2,3,4,5-tetrahydrodipicolinate binding. Catalysis depends on Lys164, which acts as the Proton donor. 170 to 171 serves as a coordination point for (S)-2,3,4,5-tetrahydrodipicolinate; the sequence is GT.

The protein belongs to the DapB family.

The protein resides in the cytoplasm. The enzyme catalyses (S)-2,3,4,5-tetrahydrodipicolinate + NAD(+) + H2O = (2S,4S)-4-hydroxy-2,3,4,5-tetrahydrodipicolinate + NADH + H(+). It carries out the reaction (S)-2,3,4,5-tetrahydrodipicolinate + NADP(+) + H2O = (2S,4S)-4-hydroxy-2,3,4,5-tetrahydrodipicolinate + NADPH + H(+). It participates in amino-acid biosynthesis; L-lysine biosynthesis via DAP pathway; (S)-tetrahydrodipicolinate from L-aspartate: step 4/4. Its function is as follows. Catalyzes the conversion of 4-hydroxy-tetrahydrodipicolinate (HTPA) to tetrahydrodipicolinate. This chain is 4-hydroxy-tetrahydrodipicolinate reductase, found in Methanococcus maripaludis (strain C7 / ATCC BAA-1331).